A 540-amino-acid polypeptide reads, in one-letter code: MAKKITFNEDARRGLERGLNTLADTVKVTLGPRGRNVVLEKKWGAPVITNDGVTIAKEIELDDPYEKIGAELVKEVAKKTDDVAGDGTTTSVVLAQAMVREGLKNVAAGADPISLRRGIEKSVAAVSKALLTSAKEVETEAEIAACASISAGDPQIGDIIAQALEKVGKEGVVTVEESNTFGTELEITEGMRFDKGYLSAYFVTDAERQETVFENPYILICDSKISSVKDLLPVVDKVIQSGKQLLIIAEDVDGEALATLVVNKIRGIFKSVAVKAPGFGDRRKMMLQDIAVLTGGQVISEEVGLKLENATLDLLGRARKVVVSKDETTIVDGAGSSDQIAGRVSQIRKELENSDSDYDREKLQERLAKLSGGVAVIRSGAATEVELKERKHRIEDAVRNAKAAVEEGIVAGGGAALLQSGTSALKDLQLTSEEAVGRNIVRSAIEAPLRQISLNAGLEPGVVVGKVSSLPQGHGLDASTGEYVDMLSRGISDPVKVTRSALENAASIAGLFLTTEAVVAEKPEPKPAPGPADPGAGMDF.

ATP contacts are provided by residues 29–32 (TLGP), 86–90 (DGTTT), G413, and D493. The segment at 520–540 (AEKPEPKPAPGPADPGAGMDF) is disordered.

This sequence belongs to the chaperonin (HSP60) family. As to quaternary structure, forms a cylinder of 14 subunits composed of two heptameric rings stacked back-to-back. Interacts with the co-chaperonin GroES.

The protein resides in the cytoplasm. It carries out the reaction ATP + H2O + a folded polypeptide = ADP + phosphate + an unfolded polypeptide.. Together with its co-chaperonin GroES, plays an essential role in assisting protein folding. The GroEL-GroES system forms a nano-cage that allows encapsulation of the non-native substrate proteins and provides a physical environment optimized to promote and accelerate protein folding. The protein is Chaperonin GroEL of Tropheryma whipplei (Whipple's bacillus).